We begin with the raw amino-acid sequence, 505 residues long: 2,3-bisphosphoglycerate-independent phosphoglycerate mutase (505 aa).

Mn(2+)-binding residues include Asp13 and Ser63. Ser63 serves as the catalytic Phosphoserine intermediate. Substrate-binding positions include His124, 153 to 154 (RD), Arg183, Arg189, 254 to 257 (RADR), and Lys330. Asp396, His400, Asp437, His438, and His456 together coordinate Mn(2+).

Belongs to the BPG-independent phosphoglycerate mutase family. As to quaternary structure, monomer. The cofactor is Mn(2+).

It carries out the reaction (2R)-2-phosphoglycerate = (2R)-3-phosphoglycerate. It participates in carbohydrate degradation; glycolysis; pyruvate from D-glyceraldehyde 3-phosphate: step 3/5. In terms of biological role, catalyzes the interconversion of 2-phosphoglycerate and 3-phosphoglycerate. This chain is 2,3-bisphosphoglycerate-independent phosphoglycerate mutase, found in Dinoroseobacter shibae (strain DSM 16493 / NCIMB 14021 / DFL 12).